We begin with the raw amino-acid sequence, 249 residues long: GTP cyclohydrolase 1 type 2 homolog (249 aa).

The a divalent metal cation site is built by H64, H65, D102, H217, and E221.

This sequence belongs to the GTP cyclohydrolase I type 2/NIF3 family. In terms of assembly, homohexamer.

The polypeptide is GTP cyclohydrolase 1 type 2 homolog (Neisseria meningitidis serogroup A / serotype 4A (strain DSM 15465 / Z2491)).